The following is a 284-amino-acid chain: Gap junction beta-1 protein (284 aa).

At 1–22 the chain is on the cytoplasmic side; the sequence is MNWTGLYTLLSGVNRHSTAIGR. A helical membrane pass occupies residues 23 to 45; that stretch reads VWLSVIFIFRIMVLVVAAESVWG. The Extracellular portion of the chain corresponds to 46–75; it reads DEKSSFICNTLQPGCNSVCYDHFFPISHVR. Residues 76–95 traverse the membrane as a helical segment; the sequence is LWSLQLILVSTPALLVAMHV. Residues 96-130 are Cytoplasmic-facing; sequence AHQQHIEKKMLRLEGHGDPLHLEEVKRHKVHISGT. A helical membrane pass occupies residues 131-153; it reads LWWTYVISVVFRLLFEAAFMYVF. Over 154–191 the chain is Extracellular; it reads YLLYPGYAMVRLVKCDAYPCPNTVDCFVSRPTEKTIFT. The chain crosses the membrane as a helical span at residues 192-214; the sequence is VFMLAASGICIILNVAEVVYLIF. At 215–284 the chain is on the cytoplasmic side; the sequence is RACARRAQRR…AEKSDRCSAC (70 aa). Ser233, Ser259, Ser267, and Ser278 each carry phosphoserine.

This sequence belongs to the connexin family. Beta-type (group I) subfamily. As to quaternary structure, a connexon is composed of a hexamer of connexins. Interacts with CNST.

The protein resides in the cell membrane. The protein localises to the cell junction. It is found in the gap junction. Its function is as follows. One gap junction consists of a cluster of closely packed pairs of transmembrane channels, the connexons, through which materials of low MW diffuse from one cell to a neighboring cell. This is Gap junction beta-1 protein (GJB1) from Bos taurus (Bovine).